A 364-amino-acid polypeptide reads, in one-letter code: DNA replication and repair protein RecF (364 aa).

An ATP-binding site is contributed by 30-37 (GKNAQGKT).

The protein belongs to the RecF family.

The protein localises to the cytoplasm. Its function is as follows. The RecF protein is involved in DNA metabolism; it is required for DNA replication and normal SOS inducibility. RecF binds preferentially to single-stranded, linear DNA. It also seems to bind ATP. The sequence is that of DNA replication and repair protein RecF from Geotalea uraniireducens (strain Rf4) (Geobacter uraniireducens).